The primary structure comprises 230 residues: Sugar fermentation stimulation protein homolog (230 aa).

Belongs to the SfsA family.

This is Sugar fermentation stimulation protein homolog from Thermoanaerobacter pseudethanolicus (strain ATCC 33223 / 39E) (Clostridium thermohydrosulfuricum).